Here is a 300-residue protein sequence, read N- to C-terminus: Dihydroorotate dehydrogenase B (NAD(+)), catalytic subunit (300 aa).

FMN-binding positions include serine 21 and 45-46; that span reads KG. Substrate is bound by residues lysine 45 and 69–73; that span reads NSIGL. Asparagine 99 and asparagine 126 together coordinate FMN. A substrate-binding site is contributed by asparagine 126. Cysteine 129 functions as the Nucleophile in the catalytic mechanism. Residues lysine 164 and valine 190 each contribute to the FMN site. Position 191–192 (191–192) interacts with substrate; it reads NT. FMN-binding positions include glycine 216, 242–243, and 264–265; these read GG and GT.

The protein belongs to the dihydroorotate dehydrogenase family. Type 1 subfamily. In terms of assembly, heterotetramer of 2 PyrK and 2 PyrD type B subunits. Requires FMN as cofactor.

The protein resides in the cytoplasm. It carries out the reaction (S)-dihydroorotate + NAD(+) = orotate + NADH + H(+). It functions in the pathway pyrimidine metabolism; UMP biosynthesis via de novo pathway; orotate from (S)-dihydroorotate (NAD(+) route): step 1/1. Functionally, catalyzes the conversion of dihydroorotate to orotate with NAD(+) as electron acceptor. The chain is Dihydroorotate dehydrogenase B (NAD(+)), catalytic subunit (pyrD) from Petrotoga mobilis (strain DSM 10674 / SJ95).